The chain runs to 507 residues: ATP synthase subunit alpha, chloroplastic (507 aa).

170-177 (GDRQTGKT) lines the ATP pocket. The residue at position 257 (threonine 257) is a Phosphothreonine.

It belongs to the ATPase alpha/beta chains family. As to quaternary structure, F-type ATPases have 2 components, CF(1) - the catalytic core - and CF(0) - the membrane proton channel. CF(1) has five subunits: alpha(3), beta(3), gamma(1), delta(1), epsilon(1). CF(0) has four main subunits: a, b, b' and c.

The protein resides in the plastid. It is found in the chloroplast thylakoid membrane. The enzyme catalyses ATP + H2O + 4 H(+)(in) = ADP + phosphate + 5 H(+)(out). Produces ATP from ADP in the presence of a proton gradient across the membrane. The alpha chain is a regulatory subunit. This chain is ATP synthase subunit alpha, chloroplastic, found in Aethionema grandiflorum (Persian stone-cress).